Here is a 333-residue protein sequence, read N- to C-terminus: L-lactate dehydrogenase A chain (333 aa).

NAD(+)-binding positions include 30–58 and R100; that span reads GMVGMAAAISILLKDLTDELALVDVMEDK. Residues R107, N139, and R170 each coordinate substrate. NAD(+) is bound at residue N139. Catalysis depends on H194, which acts as the Proton acceptor. T249 serves as a coordination point for substrate.

Belongs to the LDH/MDH superfamily. LDH family. As to quaternary structure, homotetramer.

It is found in the cytoplasm. It carries out the reaction (S)-lactate + NAD(+) = pyruvate + NADH + H(+). Its pathway is fermentation; pyruvate fermentation to lactate; (S)-lactate from pyruvate: step 1/1. The protein is L-lactate dehydrogenase A chain (ldha) of Cyprinus carpio (Common carp).